The following is a 353-amino-acid chain: Phosphate acyltransferase (353 aa).

This sequence belongs to the PlsX family. As to quaternary structure, homodimer. Probably interacts with PlsY.

Its subcellular location is the cytoplasm. The enzyme catalyses a fatty acyl-[ACP] + phosphate = an acyl phosphate + holo-[ACP]. Its pathway is lipid metabolism; phospholipid metabolism. Functionally, catalyzes the reversible formation of acyl-phosphate (acyl-PO(4)) from acyl-[acyl-carrier-protein] (acyl-ACP). This enzyme utilizes acyl-ACP as fatty acyl donor, but not acyl-CoA. The chain is Phosphate acyltransferase from Syntrophobacter fumaroxidans (strain DSM 10017 / MPOB).